We begin with the raw amino-acid sequence, 380 residues long: Cytochrome b (380 aa).

4 helical membrane-spanning segments follow: residues 34 to 54 (FGSLLGICLTTQILTGLLLAM), 78 to 99 (WLIRNIHANGASFFFICIYLHI), 114 to 134 (WNTGILLLLTLMATAFVGYVL), and 179 to 199 (FFALHFLLPFMIAGLTLIHLT). Positions 84 and 98 each coordinate heme b. Heme b is bound by residues His183 and His197. Position 202 (His202) interacts with a ubiquinone. 4 helical membrane-spanning segments follow: residues 227–247 (LKDTLGFMLMLLPLTTLALFS), 289–309 (LGGVLALAASVLILFLSPLLH), 321–341 (LSQLLFWILIANLFILTWVGS), and 348–368 (FIIIGQLASLTYFTILLILLP).

This sequence belongs to the cytochrome b family. The cytochrome bc1 complex contains 11 subunits: 3 respiratory subunits (MT-CYB, CYC1 and UQCRFS1), 2 core proteins (UQCRC1 and UQCRC2) and 6 low-molecular weight proteins (UQCRH/QCR6, UQCRB/QCR7, UQCRQ/QCR8, UQCR10/QCR9, UQCR11/QCR10 and a cleavage product of UQCRFS1). This cytochrome bc1 complex then forms a dimer. Heme b serves as cofactor.

It is found in the mitochondrion inner membrane. Its function is as follows. Component of the ubiquinol-cytochrome c reductase complex (complex III or cytochrome b-c1 complex) that is part of the mitochondrial respiratory chain. The b-c1 complex mediates electron transfer from ubiquinol to cytochrome c. Contributes to the generation of a proton gradient across the mitochondrial membrane that is then used for ATP synthesis. The chain is Cytochrome b (MT-CYB) from Fregetta tropica (Black-bellied storm-petrel).